Reading from the N-terminus, the 492-residue chain is RNA helicase CrhR (492 aa).

Residues 7 to 35 (STFADLGLSEKRCQLLADIGFEAPTQIQT) carry the Q motif motif. The region spanning 38-207 (IPLLLSGRDM…NQFLNDPALV (170 aa)) is the Helicase ATP-binding domain. 51-58 (SQTGTGKT) serves as a coordination point for ATP. A DEAD box motif is present at residues 155 to 158 (DEAD). The Helicase C-terminal domain maps to 234–379 (KALQPILEME…VCTIPNRSQV (146 aa)). Residues 451 to 492 (VLRRGRNAGGGQNKSGGGYQGKPGKPRRSSGGRRPAYSDRQQ) form a disordered region. A compositionally biased stretch (gly residues) spans 457 to 471 (NAGGGQNKSGGGYQG).

It belongs to the DEAD box helicase family.

It is found in the cytoplasm. The protein resides in the cell inner membrane. Its subcellular location is the cellular thylakoid membrane. It catalyses the reaction ATP + H2O = ADP + phosphate + H(+). Its activity is regulated as follows. Helicase inhibited by the slowly-hydrolyzing ATP analog ATP-gamma-S. Protein is rapidly degraded upon shifting from 20 to 30 degrees Celsius, the degradation machinery is only transiently present in cells grown at 30 degrees Celsius, is inhibited by commercial protease inhibitors and requires full-length protein expression (the N-terminal fragment does not induce proteolysis although it can be degraded by wild-type extract). Functionally, an ATP-dependent bidirectional RNA helicase with RNA-dependent ATPase activity; does not unwind dsDNA, uses only (d)ATP. Also has ATP-dependent RNA annealing activity; concurrent annealing and helicase activity promote strand-exchange activity. In vitro has low helicase processivity, annealing processivity is probably higher. Required for correct cold adaptation, probably by aiding translation of mRNAs required for photosynthesis and electron transport. Probably regulates the cold-shock-inducible expression of the GroESL chaperones. May partially regulate its own expression at both the transcriptional and post-transcriptional level (experiments used a construct expressing a 25 kDa trunacted protein which might have dominant-negative effects); is probably not directly involved in the pathway responsible for mRNA degradation. In Synechocystis sp. (strain ATCC 27184 / PCC 6803 / Kazusa), this protein is RNA helicase CrhR.